We begin with the raw amino-acid sequence, 200 residues long: Late embryogenesis abundant protein 19 (200 aa).

Disordered stretches follow at residues Met1 to Ser145 and Thr172 to His200. Composition is skewed to basic and acidic residues over residues Gly13–Ala23, Ser30–Ser42, Gln53–Thr81, Ala88–Asp97, and Glu105–Ala114. Residues Gly52–Thr81 are a coiled coil. 2 stretches are compositionally biased toward low complexity: residues Ala115–Gln130 and Thr186–His200.

This sequence belongs to the LEA type 4 family.

Involved in response to stress. This is Late embryogenesis abundant protein 19 from Oryza sativa subsp. japonica (Rice).